Consider the following 281-residue polypeptide: Release factor glutamine methyltransferase (281 aa).

S-adenosyl-L-methionine contacts are provided by residues 121-125 (GSGTG), Asp-144, and Asn-188. 188-191 (NPPY) contacts substrate.

It belongs to the protein N5-glutamine methyltransferase family. PrmC subfamily.

The catalysed reaction is L-glutaminyl-[peptide chain release factor] + S-adenosyl-L-methionine = N(5)-methyl-L-glutaminyl-[peptide chain release factor] + S-adenosyl-L-homocysteine + H(+). Its function is as follows. Methylates the class 1 translation termination release factors RF1/PrfA and RF2/PrfB on the glutamine residue of the universally conserved GGQ motif. The protein is Release factor glutamine methyltransferase of Aquifex aeolicus (strain VF5).